The primary structure comprises 50 residues: Large ribosomal subunit protein bL33A (50 aa).

This sequence belongs to the bacterial ribosomal protein bL33 family.

The protein is Large ribosomal subunit protein bL33A of Streptococcus thermophilus (strain CNRZ 1066).